A 210-amino-acid polypeptide reads, in one-letter code: Large ribosomal subunit protein uL3 (210 aa).

The disordered stretch occupies residues 131–154 (GPMSHGSKYHRRVGSMGATTDPGR).

This sequence belongs to the universal ribosomal protein uL3 family. As to quaternary structure, part of the 50S ribosomal subunit. Forms a cluster with proteins L14 and L19.

Its function is as follows. One of the primary rRNA binding proteins, it binds directly near the 3'-end of the 23S rRNA, where it nucleates assembly of the 50S subunit. This Thermoanaerobacter pseudethanolicus (strain ATCC 33223 / 39E) (Clostridium thermohydrosulfuricum) protein is Large ribosomal subunit protein uL3.